The primary structure comprises 345 residues: Uroporphyrinogen decarboxylase (345 aa).

Substrate contacts are provided by residues 30–34 (RQAGR), aspartate 79, tyrosine 154, serine 209, and histidine 322.

It belongs to the uroporphyrinogen decarboxylase family. In terms of assembly, homodimer.

It is found in the cytoplasm. The catalysed reaction is uroporphyrinogen III + 4 H(+) = coproporphyrinogen III + 4 CO2. The protein operates within porphyrin-containing compound metabolism; protoporphyrin-IX biosynthesis; coproporphyrinogen-III from 5-aminolevulinate: step 4/4. In terms of biological role, catalyzes the decarboxylation of four acetate groups of uroporphyrinogen-III to yield coproporphyrinogen-III. This chain is Uroporphyrinogen decarboxylase, found in Nocardioides sp. (strain ATCC BAA-499 / JS614).